The chain runs to 175 residues: DDB1- and CUL4-associated factor 16 (175 aa).

Residues 1–42 form a disordered region; that stretch reads MGPRNPSPDPLSESESEEEENTNYLNESSGEEWDSSEEEDPV. Acidic residues-rich tracts occupy residues 12-21 and 29-41; these read SESESEEEEN and SGEEWDSSEEEDP. K61 bears the N6-acetyllysine mark.

In terms of assembly, interacts with DDB1 and CUL4A.

The protein resides in the nucleus. The protein operates within protein modification; protein ubiquitination. In terms of biological role, functions as a substrate recognition component for CUL4-DDB1 E3 ubiquitin-protein ligase complex, which mediates ubiquitination and proteasome-dependent degradation of nuclear proteins. The protein is DDB1- and CUL4-associated factor 16 (DCAF16) of Bos taurus (Bovine).